The primary structure comprises 138 residues: PilB-specific inhibitory protein CpiA (138 aa).

Interacts with PilB but not with TfpB.

In terms of biological role, acts as a PilB inhibitor to control natural transformation. Inhibits type IV pili (T4P) extension by specifically binding and inhibiting the pilus extension ATPase PilB but not TfpB. This activity probably modulates T4P extension under different environmental conditions. The polypeptide is PilB-specific inhibitory protein CpiA (Acinetobacter baylyi (strain ATCC 33305 / BD413 / ADP1)).